An 891-amino-acid chain; its full sequence is Inter-alpha-trypsin inhibitor heavy chain H3 (891 aa).

The N-terminal stretch at 1–20 (MALAQWPYLILALLSGLAVS) is a signal peptide. Residues 21–34 (GFPRNPSLLLGKRS) constitute a propeptide that is removed on maturation. The region spanning 29 to 158 (LLGKRSLPGR…KVTFELTYEE (130 aa)) is the VIT domain. Asn91 carries an N-linked (GlcNAc...) asparagine glycan. In terms of domain architecture, VWFA spans 284-467 (SVVFVIDVSG…LQLQGFYEEV (184 aa)). Asp651 is subject to Aspartate 1-(chondroitin 4-sulfate)-ester. A propeptide spanning residues 652–891 (PHFIIQIPEK…HRDYIVPNLF (240 aa)) is cleaved from the precursor.

It belongs to the ITIH family. In terms of assembly, I-alpha-I plasma protease inhibitors are assembled from one or two heavy chains (H1, H2 or H3) and one light chain, bikunin. Inter-alpha-inhibitor (I-alpha-I) is composed of H1, H2 and bikunin, inter-alpha-like inhibitor (I-alpha-LI) of H2 and bikunin, and pre-alpha-inhibitor (P-alpha-I) of H3 and bikunin.

It is found in the secreted. Its function is as follows. May act as a carrier of hyaluronan in serum or as a binding protein between hyaluronan and other matrix protein, including those on cell surfaces in tissues to regulate the localization, synthesis and degradation of hyaluronan which are essential to cells undergoing biological processes. This chain is Inter-alpha-trypsin inhibitor heavy chain H3 (ITIH3), found in Bos taurus (Bovine).